Reading from the N-terminus, the 116-residue chain is Immunoglobulin heavy variable 2-4 (116 aa).

The signal sequence occupies residues 1–19 (MAVLVLLFCLVTFPSCVLS). The Ig-like domain occupies 20–116 (QVQLKQSGPG…DDTAIYYCAK (97 aa)). The cysteines at positions 41 and 114 are disulfide-linked.

The polypeptide is Immunoglobulin heavy variable 2-4 (Mus musculus (Mouse)).